We begin with the raw amino-acid sequence, 383 residues long: MSPEVALNRISPMLSPFISSVVRNGKVGLDATNCLRITDLKSGCTSLTPGPNCDRFKLHIPYAGETLKWDIIFNAQYPELPPDFIFGEDAEFLPDPSALHNLASWNPSNPECLLLVVKELVQQYHQFQCSRLRESSRLMFEYQTLLEEPQYGENMEIYAGKKNNWTGEFSARFLLKLPVDFSNIPTYLLKDVNEDPGEDVALLSVSFEDTEATQVYPKLYLSPRIEHALGGSSALHIPAFPGGGCLIDYVPQVCHLLTNKVQYVIQGYHKRREYIAAFLSHFGTGVVEYDAEGFTKLTLLLMWKDFCFLVHIDLPLFFPRDQPTLTFQSVYHFTNSGQLYSQAQKNYPYSPRWDGNEMAKRAKAYFKTFVPQFQEAAFANGKL.

At Met1 the chain carries N-acetylmethionine. At Ser2 the chain carries Phosphoserine. UEV-like stretches follow at residues 30–147 and 275–364; these read DATN…TLLE and IAAF…RAKA.

This sequence belongs to the BABAM2 family. Component of the ARISC complex, at least composed of UIMC1/RAP80, ABRAXAS1, BRCC3/BRCC36, BABAM2 and BABAM1/NBA1. Component of the BRCA1-A complex, at least composed of BRCA1, BARD1, UIMC1/RAP80, ABRAXAS1, BRCC3/BRCC36, BABAM2 and BABAM1/NBA1. In the BRCA1-A complex, interacts directly with ABRAXAS1, BRCC3/BRCC36 and BABAM1/NBA1. Binds polyubiquitin. Component of the BRISC complex, at least composed of ABRAXAS2, BRCC3/BRCC36, BABAM2 and BABAM1/NBA1. Identified in a complex with SHMT2 and the other subunits of the BRISC complex. Component of the BRCA1/BRCA2 containing complex (BRCC), which also contains BRCA1, BRCA2, BARD1, BRCC3/BRCC36 and RAD51. BRCC is a ubiquitin E3 ligase complex that enhances cellular survival following DNA damage. May interact with FAS and TNFRSF1A.

Its subcellular location is the cytoplasm. The protein resides in the nucleus. Its function is as follows. Component of the BRCA1-A complex, a complex that specifically recognizes 'Lys-63'-linked ubiquitinated histones H2A and H2AX at DNA lesions sites, leading to target the BRCA1-BARD1 heterodimer to sites of DNA damage at double-strand breaks (DSBs). The BRCA1-A complex also possesses deubiquitinase activity that specifically removes 'Lys-63'-linked ubiquitin on histones H2A and H2AX. In the BRCA1-A complex, it acts as an adapter that bridges the interaction between BABAM1/NBA1 and the rest of the complex, thereby being required for the complex integrity and modulating the E3 ubiquitin ligase activity of the BRCA1-BARD1 heterodimer. Component of the BRISC complex, a multiprotein complex that specifically cleaves 'Lys-63'-linked ubiquitin in various substrates. Within the BRISC complex, acts as an adapter that bridges the interaction between BABAM1/NBA1 and the rest of the complex, thereby being required for the complex integrity. The BRISC complex is required for normal mitotic spindle assembly and microtubule attachment to kinetochores via its role in deubiquitinating NUMA1. The BRISC complex plays a role in interferon signaling via its role in the deubiquitination of the interferon receptor IFNAR1; deubiquitination increases IFNAR1 activity by enhancing its stability and cell surface expression. Down-regulates the response to bacterial lipopolysaccharide (LPS) via its role in IFNAR1 deubiquitination. May play a role in homeostasis or cellular differentiation in cells of neural, epithelial and germline origins. May also act as a death receptor-associated anti-apoptotic protein, which inhibits the mitochondrial apoptotic pathway. May regulate TNF-alpha signaling through its interactions with TNFRSF1A; however these effects may be indirect. This is BRISC and BRCA1-A complex member 2 (BABAM2) from Bos taurus (Bovine).